The chain runs to 344 residues: L-threonine 3-dehydrogenase (344 aa).

A Zn(2+)-binding site is contributed by C42. Residues T44 and H47 each act as charge relay system in the active site. Zn(2+) contacts are provided by H67, E68, C97, C100, C103, and C111. NAD(+) contacts are provided by residues I179, D199, R204, 266–268 (LGI), and 290–291 (IY).

Belongs to the zinc-containing alcohol dehydrogenase family. In terms of assembly, homotetramer. The cofactor is Zn(2+).

Its subcellular location is the cytoplasm. The enzyme catalyses L-threonine + NAD(+) = (2S)-2-amino-3-oxobutanoate + NADH + H(+). The protein operates within amino-acid degradation; L-threonine degradation via oxydo-reductase pathway; glycine from L-threonine: step 1/2. Functionally, catalyzes the NAD(+)-dependent oxidation of L-threonine to 2-amino-3-ketobutyrate. This Sinorhizobium medicae (strain WSM419) (Ensifer medicae) protein is L-threonine 3-dehydrogenase.